The following is a 436-amino-acid chain: L-threonine dehydratase biosynthetic IlvA (436 aa).

The interval 1 to 357 (MSETYVSEKS…HRGLKHYFLV (357 aa)) is catalytic. Lys70 carries the post-translational modification N6-(pyridoxal phosphate)lysine. Pyridoxal 5'-phosphate-binding positions include Asn97, 203-207 (GGGGL), and Ser329. The ACT-like domain maps to 353–427 (HYFLVNFPQK…SAIDSRRLEP (75 aa)). The regulatory stretch occupies residues 358 to 436 (NFPQKPGQLR…PGTPEYEYLT (79 aa)).

It belongs to the serine/threonine dehydratase family. Homotetramer. It depends on pyridoxal 5'-phosphate as a cofactor.

It catalyses the reaction L-threonine = 2-oxobutanoate + NH4(+). The protein operates within amino-acid biosynthesis; L-isoleucine biosynthesis; 2-oxobutanoate from L-threonine: step 1/1. Functionally, catalyzes the anaerobic formation of alpha-ketobutyrate and ammonia from threonine in a two-step reaction. The first step involved a dehydration of threonine and a production of enamine intermediates (aminocrotonate), which tautomerizes to its imine form (iminobutyrate). Both intermediates are unstable and short-lived. The second step is the nonenzymatic hydrolysis of the enamine/imine intermediates to form 2-ketobutyrate and free ammonia. In the low water environment of the cell, the second step is accelerated by RidA. The chain is L-threonine dehydratase biosynthetic IlvA (ilvA) from Corynebacterium glutamicum (strain ATCC 13032 / DSM 20300 / JCM 1318 / BCRC 11384 / CCUG 27702 / LMG 3730 / NBRC 12168 / NCIMB 10025 / NRRL B-2784 / 534).